The primary structure comprises 473 residues: Adenosylhomocysteinase (473 aa).

Substrate contacts are provided by T64, D139, and E199. Residue 200-202 coordinates NAD(+); sequence TTT. Residues K229 and D233 each contribute to the substrate site. NAD(+) contacts are provided by residues N234, 263–268, E286, N321, 342–344, and N387; these read GYGDVG and IGH.

This sequence belongs to the adenosylhomocysteinase family. NAD(+) serves as cofactor.

Its subcellular location is the cytoplasm. It catalyses the reaction S-adenosyl-L-homocysteine + H2O = L-homocysteine + adenosine. Its pathway is amino-acid biosynthesis; L-homocysteine biosynthesis; L-homocysteine from S-adenosyl-L-homocysteine: step 1/1. May play a key role in the regulation of the intracellular concentration of adenosylhomocysteine. The chain is Adenosylhomocysteinase from Burkholderia mallei (strain SAVP1).